The following is a 101-amino-acid chain: Large ribosomal subunit protein uL24 (101 aa).

The protein belongs to the universal ribosomal protein uL24 family. Part of the 50S ribosomal subunit.

One of two assembly initiator proteins, it binds directly to the 5'-end of the 23S rRNA, where it nucleates assembly of the 50S subunit. In terms of biological role, one of the proteins that surrounds the polypeptide exit tunnel on the outside of the subunit. This is Large ribosomal subunit protein uL24 from Thermobifida fusca (strain YX).